The primary structure comprises 186 residues: Peptidyl-tRNA hydrolase (186 aa).

TRNA is bound at residue tyrosine 14. Histidine 19 (proton acceptor) is an active-site residue. Tyrosine 61, asparagine 63, and asparagine 107 together coordinate tRNA.

This sequence belongs to the PTH family. Monomer.

Its subcellular location is the cytoplasm. It catalyses the reaction an N-acyl-L-alpha-aminoacyl-tRNA + H2O = an N-acyl-L-amino acid + a tRNA + H(+). Its function is as follows. Hydrolyzes ribosome-free peptidyl-tRNAs (with 1 or more amino acids incorporated), which drop off the ribosome during protein synthesis, or as a result of ribosome stalling. In terms of biological role, catalyzes the release of premature peptidyl moieties from peptidyl-tRNA molecules trapped in stalled 50S ribosomal subunits, and thus maintains levels of free tRNAs and 50S ribosomes. This is Peptidyl-tRNA hydrolase from Helicobacter pylori (strain Shi470).